Reading from the N-terminus, the 312-residue chain is Cathepsin O (312 aa).

Positions 1–23 (MKPQLVNLLLLCCCCLGRHGVAG) are cleaved as a signal peptide. The propeptide at 24–98 (TWSWSHQREA…EGQRPIPNVS (75 aa)) is activation peptide. Residues asparagine 53 and asparagine 96 are each glycosylated (N-linked (GlcNAc...) asparagine). Cystine bridges form between cysteine 120-cysteine 161, cysteine 154-cysteine 195, and cysteine 253-cysteine 301. Cysteine 123 is a catalytic residue. Active-site residues include histidine 260 and asparagine 280.

This sequence belongs to the peptidase C1 family.

The protein resides in the lysosome. It carries out the reaction The recombinant human enzyme hydrolyzes synthetic endopeptidase substrates including Z-Phe-Arg-NHMec and Z-Arg-Arg-NHMec.. Functionally, proteolytic enzyme possibly involved in normal cellular protein degradation and turnover. The protein is Cathepsin O (Ctso) of Mus musculus (Mouse).